A 255-amino-acid polypeptide reads, in one-letter code: Arginine-binding extracellular protein ArtP (255 aa).

Positions 1 to 19 (MKKWLLLLVAACITFALTA) are cleaved as a signal peptide. Cysteine 20 carries N-palmitoyl cysteine lipidation. Cysteine 20 is lipidated: S-diacylglycerol cysteine.

The protein belongs to the bacterial solute-binding protein 3 family.

The protein localises to the cell membrane. Functionally, part of a binding-protein-dependent transport system for arginine. The chain is Arginine-binding extracellular protein ArtP (artP) from Bacillus subtilis (strain 168).